A 122-amino-acid polypeptide reads, in one-letter code: Large ribosomal subunit protein uL14 (122 aa).

It belongs to the universal ribosomal protein uL14 family. Part of the 50S ribosomal subunit. Forms a cluster with proteins L3 and L19. In the 70S ribosome, L14 and L19 interact and together make contacts with the 16S rRNA in bridges B5 and B8.

Binds to 23S rRNA. Forms part of two intersubunit bridges in the 70S ribosome. The polypeptide is Large ribosomal subunit protein uL14 (Bacillus subtilis (strain 168)).